The following is a 117-amino-acid chain: Large ribosomal subunit protein bL19 (117 aa).

The protein belongs to the bacterial ribosomal protein bL19 family.

Functionally, this protein is located at the 30S-50S ribosomal subunit interface and may play a role in the structure and function of the aminoacyl-tRNA binding site. The protein is Large ribosomal subunit protein bL19 of Shewanella baltica (strain OS155 / ATCC BAA-1091).